The chain runs to 99 residues: Beta-defensin 127 (99 aa).

An N-terminal signal peptide occupies residues 1-20 (MGLFMIIAILLFQKPTVTEQ). Disulfide bonds link C24/C53, C33/C47, and C37/C54. Positions 66-99 (ITKPPRPKPATLALTLQDYVTIIENFPSLKTQST) are excised as a propeptide.

Belongs to the beta-defensin family.

It localises to the secreted. Has antibacterial activity. The protein is Beta-defensin 127 (DEFB127) of Homo sapiens (Human).